Here is a 455-residue protein sequence, read N- to C-terminus: ATP-dependent protease ATPase subunit HslU (455 aa).

ATP is bound by residues V23, 65–70 (GVGKTE), D266, E333, and R405.

It belongs to the ClpX chaperone family. HslU subfamily. In terms of assembly, a double ring-shaped homohexamer of HslV is capped on each side by a ring-shaped HslU homohexamer. The assembly of the HslU/HslV complex is dependent on binding of ATP.

It localises to the cytoplasm. ATPase subunit of a proteasome-like degradation complex; this subunit has chaperone activity. The binding of ATP and its subsequent hydrolysis by HslU are essential for unfolding of protein substrates subsequently hydrolyzed by HslV. HslU recognizes the N-terminal part of its protein substrates and unfolds these before they are guided to HslV for hydrolysis. The sequence is that of ATP-dependent protease ATPase subunit HslU from Xanthomonas euvesicatoria pv. vesicatoria (strain 85-10) (Xanthomonas campestris pv. vesicatoria).